Reading from the N-terminus, the 308-residue chain is UPF0282 protein M1425_2116 (308 aa).

The protein belongs to the UPF0282 family.

The protein is UPF0282 protein M1425_2116 of Saccharolobus islandicus (strain M.14.25 / Kamchatka #1) (Sulfolobus islandicus).